The chain runs to 641 residues: Acetyl-coenzyme A synthetase (641 aa).

CoA contacts are provided by residues 186–189 (RGGK) and threonine 304. Residues 380–382 (GEP), 404–409 (DTWWQT), aspartate 493, and arginine 508 contribute to the ATP site. CoA is bound at residue serine 516. An ATP-binding site is contributed by arginine 519. Mg(2+)-binding residues include valine 530, histidine 532, and isoleucine 535. Lysine 602 is modified (N6-acetyllysine).

The protein belongs to the ATP-dependent AMP-binding enzyme family. The cofactor is Mg(2+). Post-translationally, acetylated. Deacetylation by the SIR2-homolog deacetylase activates the enzyme.

The catalysed reaction is acetate + ATP + CoA = acetyl-CoA + AMP + diphosphate. Its function is as follows. Catalyzes the conversion of acetate into acetyl-CoA (AcCoA), an essential intermediate at the junction of anabolic and catabolic pathways. AcsA undergoes a two-step reaction. In the first half reaction, AcsA combines acetate with ATP to form acetyl-adenylate (AcAMP) intermediate. In the second half reaction, it can then transfer the acetyl group from AcAMP to the sulfhydryl group of CoA, forming the product AcCoA. The chain is Acetyl-coenzyme A synthetase from Gamma-proteobacterium EBAC31A08.